A 192-amino-acid chain; its full sequence is MKIGVLGIQGDIQEHLRMIEKTGNEPLWVKSTSELAEVSGLIMPGGESTTMIRLMKKYELWDALREAIASGLPVYATCAGMILLAREIINYPEQETLGVLDIAVERNGYGRQVASFETDLEIPAIGDTPFRAIFIRAPIIEKCGDSVEVLSTYKEKPVLVKQGKILASSFHPELTDDLRIHEYFVKEIIGKE.

Position 46–48 (46–48 (GES)) interacts with L-glutamine. Cys78 acts as the Nucleophile in catalysis. L-glutamine is bound by residues Arg106 and 135–136 (IR). Residues His171 and Glu173 each act as charge relay system in the active site.

Belongs to the glutaminase PdxT/SNO family. In the presence of PdxS, forms a dodecamer of heterodimers. Only shows activity in the heterodimer.

The catalysed reaction is aldehydo-D-ribose 5-phosphate + D-glyceraldehyde 3-phosphate + L-glutamine = pyridoxal 5'-phosphate + L-glutamate + phosphate + 3 H2O + H(+). It carries out the reaction L-glutamine + H2O = L-glutamate + NH4(+). Its pathway is cofactor biosynthesis; pyridoxal 5'-phosphate biosynthesis. Functionally, catalyzes the hydrolysis of glutamine to glutamate and ammonia as part of the biosynthesis of pyridoxal 5'-phosphate. The resulting ammonia molecule is channeled to the active site of PdxS. The protein is Pyridoxal 5'-phosphate synthase subunit PdxT of Kosmotoga olearia (strain ATCC BAA-1733 / DSM 21960 / TBF 19.5.1).